Reading from the N-terminus, the 207-residue chain is uncharacterized protein (207 aa).

Active-site charge relay system residues include serine 119 and histidine 160.

This sequence belongs to the peptidase S51 family.

This is an uncharacterized protein from Pasteurella multocida (strain Pm70).